A 776-amino-acid polypeptide reads, in one-letter code: Venom dipeptidyl peptidase 4 (776 aa).

The N-terminal stretch at 1–25 (MVPLRSFVLLNSLFLVLLAARTVVT) is a signal peptide. Residues N44, N66, and N329 are each glycosylated (N-linked (GlcNAc...) asparagine). Disulfide bonds link C449–C452 and C462–C480. N-linked (GlcNAc...) asparagine glycosylation is found at N504 and N577. Catalysis depends on S638, which acts as the Charge relay system. A disulfide bridge links C658 with C769. N-linked (GlcNAc...) asparagine glycosylation is found at N688 and N693. Catalysis depends on charge relay system residues D717 and H749.

The protein belongs to the peptidase S9B family. DPPIV subfamily. Expressed by the venom gland.

It is found in the secreted. The enzyme catalyses Release of an N-terminal dipeptide, Xaa-Yaa-|-Zaa-, from a polypeptide, preferentially when Yaa is Pro, provided Zaa is neither Pro nor hydroxyproline.. Its activity is regulated as follows. Inhibited by diprotin A. Functionally, venom dipeptidyl-peptidase which removes N-terminal dipeptides sequentially from polypeptides having unsubstituted N-termini provided that the penultimate residue is proline. May process venom proteins into their active forms and/or modulate the chemotactic activity of immune cells after the insect sting. The chain is Venom dipeptidyl peptidase 4 from Vespula vulgaris (Yellow jacket).